The primary structure comprises 259 residues: Type III pantothenate kinase (259 aa).

6–13 (DVGNTNIV) contacts ATP. Residues Tyr100 and 107-110 (GADR) contribute to the substrate site. The Proton acceptor role is filled by Asp109. Asp129 provides a ligand contact to K(+). Thr132 provides a ligand contact to ATP. Thr184 provides a ligand contact to substrate.

It belongs to the type III pantothenate kinase family. Homodimer. Requires NH4(+) as cofactor. The cofactor is K(+).

It is found in the cytoplasm. It catalyses the reaction (R)-pantothenate + ATP = (R)-4'-phosphopantothenate + ADP + H(+). It functions in the pathway cofactor biosynthesis; coenzyme A biosynthesis; CoA from (R)-pantothenate: step 1/5. Functionally, catalyzes the phosphorylation of pantothenate (Pan), the first step in CoA biosynthesis. The polypeptide is Type III pantothenate kinase (Clostridium perfringens (strain 13 / Type A)).